Here is a 238-residue protein sequence, read N- to C-terminus: ATP-dependent Clp protease ATP-binding subunit CLPT1, chloroplastic (238 aa).

Residues 1–64 (MASYTVSFIP…VPKLRCLTSA (64 aa)) constitute a chloroplast transit peptide. Residues 83-228 (IPKWSARAIK…KEVEKSMNED (146 aa)) enclose the Clp R domain. Repeat regions lie at residues 86–151 (WSAR…LGKS) and 163–228 (LTEP…MNED).

This sequence belongs to the ClpA/ClpB family. Monomer and homodimer. Binds to the CLP3-6 ring (P-ring). The dimers monomerize before association to the P-ring. Component of the chloroplastic Clp protease core complex which consist of at least 16 proteins: CLPP4 (3 copies), CLPP5 (3 copies), CLPR4 (2 copies), ClpP1 (1 copy), CLPP6 (1 copy), CLPR2 (1 copy), CLPT1 (1 copy), CLPT2 (1 copy) and 3 copies of CLPP3 and/or CLPR1 and/or CLPR3. Interacts with CLPC2 and CLPD. Interacts with CPN21. No interactions with CLPS1.

The protein resides in the plastid. The protein localises to the chloroplast. Functionally, accessory protein regulating the assembly of the plastidial Clp protease system. CLPT1 first binds to the heptameric P-ring containing the CLP3-6 subunits followed by CLPT2, and only then does the P-ring combine with the R-ring composed of the clpP1 and CLPR1-4 subunits. Once the core complex is fully assembled, it then associates to the CLPC chaperone partner to form the functional protease. CLPT1 and CLPT2 are partially redundant. The polypeptide is ATP-dependent Clp protease ATP-binding subunit CLPT1, chloroplastic (Arabidopsis thaliana (Mouse-ear cress)).